Consider the following 220-residue polypeptide: Ribonuclease HII (220 aa).

Residues M1–K210 enclose the RNase H type-2 domain. Positions 7, 8, and 105 each coordinate a divalent metal cation.

The protein belongs to the RNase HII family. It depends on Mn(2+) as a cofactor. The cofactor is Mg(2+).

Its subcellular location is the cytoplasm. It carries out the reaction Endonucleolytic cleavage to 5'-phosphomonoester.. Functionally, endonuclease that specifically degrades the RNA of RNA-DNA hybrids. This Pyrococcus horikoshii (strain ATCC 700860 / DSM 12428 / JCM 9974 / NBRC 100139 / OT-3) protein is Ribonuclease HII (rnhB).